Reading from the N-terminus, the 183-residue chain is Large ribosomal subunit protein eL18 (183 aa).

A disordered region spans residues 146-183 (HFGPAPGVPHSHTKPYVRSKGRKFEKARGRRKSRGFRV). 2 stretches are compositionally biased toward basic residues: residues 156-166 (SHTKPYVRSKG) and 173-183 (RGRRKSRGFRV).

The protein belongs to the eukaryotic ribosomal protein eL18 family.

The sequence is that of Large ribosomal subunit protein eL18 (RPL18) from Cicer arietinum (Chickpea).